The chain runs to 432 residues: Acyl-CoA dehydrogenase AFT10-1 (432 aa).

This sequence belongs to the acyl-CoA dehydrogenase family. FAD is required as a cofactor.

It participates in mycotoxin biosynthesis. Acyl-CoA dehydrogenase; part of the gene clusters that mediate the biosynthesis of the host-selective toxins (HSTs) AF-toxins responsible for Alternaria black spot of strawberry disease by the strawberry pathotype. AF-toxin I and III are valine derivatives of 2,3-dyhydroxy-isovaleric acid and 2-hydroxy-isovaleric acid respectively, while AF II is an isoleucine derivative of 2-hydroxy-valeric acid. These derivatives are bound to a 9,10-epoxy-8-hydroxy-9-methyl-decatrienoic acid (EDA) moiety. On cellular level, AF-toxins affect plasma membrane of susceptible cells and cause a sudden increase in loss of K(+) after a few minutes of toxin treatment. The aldo-keto reductase AFTS1 catalyzes the conversion of 2-keto-isovaleric acid (2-KIV) to 2-hydroxy-isovaleric acid (2-HIV) by reduction of its ketone to an alcohol. The acyl-CoA ligase AFT1, the hydrolase AFT2 and the enoyl-CoA hydratases AFT3 and AFT6, but also the polyketide synthase AFT9, the acyl-CoA dehydrogenase AFT10, the cytochrome P450 monooxygenase AFT11 and the oxidoreductase AFT12 are all involved in the biosynthesis of the AK-, AF- and ACT-toxin common EDA structural moiety. The exact function of each enzyme, and of additional enzymes identified within the AF-toxin clusters have still to be determined. This chain is Acyl-CoA dehydrogenase AFT10-1, found in Alternaria alternata (Alternaria rot fungus).